Consider the following 1336-residue polypeptide: Coiled-coil and C2 domain-containing protein 2A (1336 aa).

2 disordered regions span residues 1–29 (MEAA…EQEV) and 70–97 (VEDC…QTFI). Over residues 8 to 23 (KTAKKKRKTHTTRGYR) the composition is skewed to basic residues. Over residues 70–89 (VEDCQESDEDSGGELAEEPT) the composition is skewed to acidic residues. A coiled-coil region spans residues 136 to 156 (LSDLSELKDSQIRMLNRYQEQ). A C2 domain is found at 755–915 (PREPSGWSGH…LASRTFEGCI (161 aa)).

As to quaternary structure, probable component of the tectonic-like complex (also named MKS complex), composed of B9d1, B9d2, Cc2d2a, Mks1 and tctn. Expressed in the antennae of chordotonal neurons and male germ cells (at protein level).

It localises to the cytoplasm. The protein resides in the cytoskeleton. Its subcellular location is the cilium basal body. It is found in the microtubule organizing center. The protein localises to the centrosome. It localises to the centriole. Probable component of the tectonic-like complex (also named MKS complex), a complex localized at the transition zone of primary cilia. Required for ciliary structure and function. The sequence is that of Coiled-coil and C2 domain-containing protein 2A from Drosophila melanogaster (Fruit fly).